The following is a 730-amino-acid chain: ABC transporter G family member 3 (730 aa).

The span at 1 to 28 (MEEIQSQSDLYRSSSSSASSPTSRVPSS) shows a compositional bias: low complexity. The segment at 1–100 (MEEIQSQSDL…MASPPVPEGG (100 aa)) is disordered. Acidic residues predominate over residues 47-56 (DSPEWEDTPD). Residues 72–91 (NDATTTPVSPSLSKMNSGSM) show a composition bias toward polar residues. Residue S93 is modified to Phosphoserine. Residues 114–356 (IAWKDLTVTM…FSNAGFPCPI (243 aa)) enclose the ABC transporter domain. 151-158 (GPAKSGKS) is a binding site for ATP. In terms of domain architecture, ABC transmembrane type-2 spans 441–653 (TRVAVLTWRS…SIEGLLENEY (213 aa)). 6 helical membrane passes run 465–485 (LILY…LGHS), 495–515 (AVFV…PSLL), 532–552 (AFVF…LMSI), 575–595 (VLNF…IACI), 600–620 (YWST…AGHF), and 689–709 (MLVL…LLRF).

This sequence belongs to the ABC transporter superfamily. ABCG family. Eye pigment precursor importer (TC 3.A.1.204) subfamily.

The protein resides in the membrane. This chain is ABC transporter G family member 3 (ABCG3), found in Arabidopsis thaliana (Mouse-ear cress).